Reading from the N-terminus, the 453-residue chain is Na(+)/H(+) antiporter NhaA (453 aa).

The next 12 helical transmembrane spans lie at 27–47 (FLHI…AALM), 78–98 (LHFW…GMEI), 114–134 (ILPI…YFSF), 143–163 (GWAV…ALLG), 172–192 (IILL…IAFF), 201–221 (GLVI…IGFA), 222–242 (SAWL…VTGI), 249–269 (VILG…PLTI), 316–336 (PWVA…VSFA), 346–366 (FLIV…GIIT), 385–405 (WAGI…SIFV), and 421–441 (IGVL…GLIY).

Belongs to the NhaA Na(+)/H(+) (TC 2.A.33) antiporter family.

The protein localises to the cell inner membrane. It catalyses the reaction Na(+)(in) + 2 H(+)(out) = Na(+)(out) + 2 H(+)(in). In terms of biological role, na(+)/H(+) antiporter that extrudes sodium in exchange for external protons. The sequence is that of Na(+)/H(+) antiporter NhaA from Bartonella henselae (strain ATCC 49882 / DSM 28221 / CCUG 30454 / Houston 1) (Rochalimaea henselae).